Here is an 89-residue protein sequence, read N- to C-terminus: Small ribosomal subunit protein bS16 (89 aa).

It belongs to the bacterial ribosomal protein bS16 family.

This chain is Small ribosomal subunit protein bS16, found in Chloroflexus aggregans (strain MD-66 / DSM 9485).